A 630-amino-acid polypeptide reads, in one-letter code: MRKWRIEDSEELYNITGWGTSYFGINDKGHVVVTPRKDGVAVDLKELVDELQLRDVAAPMLVRFPDILDNRIEKTAYCFKQASEEYGYKAQNFIIYPIKVNQMRPVVEEIISHGKKFNLGLEAGSKPELHAVIAVNTDSDSLIICNGYKDESYIELALLAQKMGKRIFLVVEKMNELKLIARMAKQLNVQPNIGIRIKLASSGSGKWEESGGDASKFGLTSSELLEALDFLESKGMKDCLKLIHFHIGSQVTKIRRIKTALREASQFYVQLHAMGFNVEFVDIGGGLGVDYDGTRSSSSESSVNYSIQEYVNDSISTLVDASDKNGIPHPNIITESGRALTAHHSVLIFEVLETATLPQWDDEEEIAPDAHELVQELYGIWDTLNQNKMLEAWHDAQQIREEALDLFSHGIVDLKTRAQIERLYWSITREINQIAGGLKHAPDEFRGLSKLLADKYFCNFSLFQSLPDSWAIDQIFPIMPIQRLDEKPDRSATLQDITCDSDGKIANFISTRNVAHYMPVHSLKQKEPYYVAVFLVGAYQEILGDMHNLFGDTNAVHVSVNEKGYNIEQIIDGETVAEVLDYVQYSPKKLVRTLETWVTKSVKEGKISVEEGKEFLSNYRSGLYGYTYLE.

Lys99 carries the post-translational modification N6-(pyridoxal phosphate)lysine. 281–291 (VDIGGGLGVDY) lines the substrate pocket.

The protein belongs to the Orn/Lys/Arg decarboxylase class-II family. SpeA subfamily. It depends on Mg(2+) as a cofactor. Pyridoxal 5'-phosphate is required as a cofactor.

It catalyses the reaction L-arginine + H(+) = agmatine + CO2. The protein operates within amine and polyamine biosynthesis; agmatine biosynthesis; agmatine from L-arginine: step 1/1. Functionally, catalyzes the biosynthesis of agmatine from arginine. This chain is Biosynthetic arginine decarboxylase, found in Bacteroides fragilis (strain ATCC 25285 / DSM 2151 / CCUG 4856 / JCM 11019 / LMG 10263 / NCTC 9343 / Onslow / VPI 2553 / EN-2).